A 132-amino-acid polypeptide reads, in one-letter code: Small ribosomal subunit protein uS8 (132 aa).

Belongs to the universal ribosomal protein uS8 family. In terms of assembly, part of the 30S ribosomal subunit. Contacts proteins S5 and S12.

Its function is as follows. One of the primary rRNA binding proteins, it binds directly to 16S rRNA central domain where it helps coordinate assembly of the platform of the 30S subunit. The protein is Small ribosomal subunit protein uS8 of Geobacter sp. (strain M21).